Reading from the N-terminus, the 302-residue chain is Rab effector Noc2 (302 aa).

Residues 41-158 form the RabBD domain; sequence QRRSQCLSPG…KRSGAWFYKG (118 aa). The segment at 89 to 146 adopts an FYVE-type zinc-finger fold; the sequence is GNGLSQCLLCGEVLGFLGSSSVFCKDCRKKVCTKCGIEASPGQKRPLWLCKICSEQRE. Residues cysteine 95, cysteine 98, cysteine 112, cysteine 115, cysteine 120, cysteine 123, cysteine 138, and cysteine 141 each coordinate Zn(2+). The tract at residues 174-302 is disordered; the sequence is DPHFRPLPVE…KRHTWATPRY (129 aa). Residues 185–197 show a composition bias toward polar residues; it reads TETQPPSAETSRV. The residue at position 248 (serine 248) is a Phosphoserine. Residues 258-269 are compositionally biased toward low complexity; the sequence is SHLSGSQSSLGS.

In terms of assembly, recruited to dense-core vesicles through specific interaction with RAB27A in endocrine cells. Interacts with RAB3A, RAB3B, RAB3C and RAB3D. Interacts with ZYX. As to expression, highly expressed in pancreatic islets. High to moderate expression in adrenal gland, pituitary gland and ovary.

The protein resides in the cytoplasm. It localises to the cytoplasmic vesicle. It is found in the secretory vesicle membrane. Functionally, rab GTPase effector involved in the late steps of regulated exocytosis, both in endocrine and exocrine cells. Regulates the exocytosis of dense-core vesicles in neuroendocrine cells through interaction with RAB27A. Acts as a potential RAB3B effector protein in epithelial cells. This Mus musculus (Mouse) protein is Rab effector Noc2 (Rph3al).